The following is a 98-amino-acid chain: Small ribosomal subunit protein bS20 (98 aa).

A compositionally biased stretch (basic residues) spans 1–12 (MAPRKPSKKVGP). Residues 1–31 (MAPRKPSKKVGPQKRPSAEKRVITSKKKQLR) are disordered.

It belongs to the bacterial ribosomal protein bS20 family.

Binds directly to 16S ribosomal RNA. In Chlamydia trachomatis serovar L2 (strain ATCC VR-902B / DSM 19102 / 434/Bu), this protein is Small ribosomal subunit protein bS20.